The following is a 463-amino-acid chain: L-seryl-tRNA(Sec) selenium transferase (463 aa).

Lys295 bears the N6-(pyridoxal phosphate)lysine mark.

The protein belongs to the SelA family. In terms of assembly, homodecamer; pentamer of dimers. Binds only one seryl-tRNA(Sec) per dimer. Requires pyridoxal 5'-phosphate as cofactor.

The protein localises to the cytoplasm. It catalyses the reaction L-seryl-tRNA(Sec) + selenophosphate + H(+) = L-selenocysteinyl-tRNA(Sec) + phosphate. It participates in aminoacyl-tRNA biosynthesis; selenocysteinyl-tRNA(Sec) biosynthesis; selenocysteinyl-tRNA(Sec) from L-seryl-tRNA(Sec) (bacterial route): step 1/1. Functionally, converts seryl-tRNA(Sec) to selenocysteinyl-tRNA(Sec) required for selenoprotein biosynthesis. The protein is L-seryl-tRNA(Sec) selenium transferase of Salmonella paratyphi B (strain ATCC BAA-1250 / SPB7).